The following is a 187-amino-acid chain: GTP cyclohydrolase 1 (187 aa).

3 residues coordinate Zn(2+): Cys76, His79, and Cys148.

It belongs to the GTP cyclohydrolase I family. As to quaternary structure, homomer.

It carries out the reaction GTP + H2O = 7,8-dihydroneopterin 3'-triphosphate + formate + H(+). It functions in the pathway cofactor biosynthesis; 7,8-dihydroneopterin triphosphate biosynthesis; 7,8-dihydroneopterin triphosphate from GTP: step 1/1. This is GTP cyclohydrolase 1 from Desulforamulus reducens (strain ATCC BAA-1160 / DSM 100696 / MI-1) (Desulfotomaculum reducens).